Here is a 188-residue protein sequence, read N- to C-terminus: Threonylcarbamoyl-AMP synthase (188 aa).

Residues 3-188 (QLHPSDIKDV…RSGKILRNGQ (186 aa)) form the YrdC-like domain.

The protein belongs to the SUA5 family. TsaC subfamily.

Its subcellular location is the cytoplasm. The enzyme catalyses L-threonine + hydrogencarbonate + ATP = L-threonylcarbamoyladenylate + diphosphate + H2O. In terms of biological role, required for the formation of a threonylcarbamoyl group on adenosine at position 37 (t(6)A37) in tRNAs that read codons beginning with adenine. Catalyzes the conversion of L-threonine, HCO(3)(-)/CO(2) and ATP to give threonylcarbamoyl-AMP (TC-AMP) as the acyladenylate intermediate, with the release of diphosphate. The protein is Threonylcarbamoyl-AMP synthase of Shewanella oneidensis (strain ATCC 700550 / JCM 31522 / CIP 106686 / LMG 19005 / NCIMB 14063 / MR-1).